The following is a 314-amino-acid chain: ATP synthase gamma chain (314 aa).

Belongs to the ATPase gamma chain family. In terms of assembly, F-type ATPases have 2 components, CF(1) - the catalytic core - and CF(0) - the membrane proton channel. CF(1) has five subunits: alpha(3), beta(3), gamma(1), delta(1), epsilon(1). CF(0) has three main subunits: a, b and c.

It is found in the cellular thylakoid membrane. Functionally, produces ATP from ADP in the presence of a proton gradient across the membrane. The gamma chain is believed to be important in regulating ATPase activity and the flow of protons through the CF(0) complex. This is ATP synthase gamma chain from Gloeothece citriformis (strain PCC 7424) (Cyanothece sp. (strain PCC 7424)).